We begin with the raw amino-acid sequence, 307 residues long: Nucleotide-binding protein Sca_0414 (307 aa).

19-26 (GMSGAGKS) is a binding site for ATP. 70 to 73 (DLRG) serves as a coordination point for GTP.

The protein belongs to the RapZ-like family.

In terms of biological role, displays ATPase and GTPase activities. The chain is Nucleotide-binding protein Sca_0414 from Staphylococcus carnosus (strain TM300).